The chain runs to 415 residues: MIITDIYAQEVLDSRGNPTVRAFVALEDGTLAGATVPSGASTGKREALELRDGDERFCGKGVLKAVENVNTVIADEIVGMNVYEQKDIDNAMKKLDGTENYSNLGANAVLGVSMAVARAAAMSLGIPLYRYLGGANAQILPVPMFNIINGGAHANNSVDFQEFMVMPFGFDCFSDALRAVAEIYQNLKKILNELGYSTAVGDEGGFAPNLKDNEEPIKIIMQAIKKAGYEPGKQIKIALDVAASELYENGKYRLEGKTFTSEELIERYVKLCEKYPIFSIEDGLGEDDWEGWKKLTARLKDKIQLVGDDLFVTNEKILREGIEKGIANAILIKPNQIGSITQTMQTVRLAQRNGYRCIMSHRSGESEDSFIADFAVALNTGEIKTGATSRSERNAKYNRLLEIECENTEFLGNKI.

Q161 provides a ligand contact to (2R)-2-phosphoglycerate. E203 acts as the Proton donor in catalysis. Mg(2+)-binding residues include D240, E281, and D308. Positions 333, 362, 363, and 384 each coordinate (2R)-2-phosphoglycerate. The active-site Proton acceptor is the K333.

The protein belongs to the enolase family. Mg(2+) is required as a cofactor.

Its subcellular location is the cytoplasm. It localises to the secreted. The protein localises to the cell surface. The catalysed reaction is (2R)-2-phosphoglycerate = phosphoenolpyruvate + H2O. Its pathway is carbohydrate degradation; glycolysis; pyruvate from D-glyceraldehyde 3-phosphate: step 4/5. Functionally, catalyzes the reversible conversion of 2-phosphoglycerate (2-PG) into phosphoenolpyruvate (PEP). It is essential for the degradation of carbohydrates via glycolysis. The protein is Enolase of Campylobacter hominis (strain ATCC BAA-381 / DSM 21671 / CCUG 45161 / LMG 19568 / NCTC 13146 / CH001A).